Here is a 190-residue protein sequence, read N- to C-terminus: Dynein axonemal light chain 1 (190 aa).

Ala-2 carries the post-translational modification N-acetylalanine. LRR repeat units lie at residues 49–70, 71–92, 94–115, and 116–137; these read NCEKLSLSTNCIEKIANLNGLK, NLRILSLGRNNIKNLNGLEAVG, TLEELWISYNFIEKLKGIHIMK, and KLKILYMSNNLVKDWAEFVKLA. Phosphoserine is present on Ser-56. In terms of domain architecture, LRRCT spans 150-190; the sequence is NPLEEKHSAENNWIEEATKRVPKLKKLDGTPVIKGDEEEDN.

This sequence belongs to the dynein light chain LC1-type family. In terms of assembly, interacts with ZMYND10 (via C-terminus). Interacts with DNAH5, a outer arm dynein heavy chain. Interacts with tubulin located within the A-tubule of the outer doublets in a ATP-independent manner. Expressed in tissues carrying motile cilia such as respiratory epithelia, ependyma and testis.

The protein resides in the cytoplasm. The protein localises to the cytoskeleton. It localises to the cilium axoneme. Functionally, part of the multisubunit axonemal ATPase complexes that generate the force for cilia motility and govern beat frequency. Component of the outer arm dynein (ODA). May be involved in a mechanosensory feedback mechanism controlling ODA activity based on external conformational cues by tethering the outer arm dynein heavy chain (DNAH5) to the microtubule within the axoneme. Important for ciliary function in the airways and for the function of the cilia that produce the nodal flow essential for the determination of the left-right asymmetry. The chain is Dynein axonemal light chain 1 from Homo sapiens (Human).